The following is a 118-amino-acid chain: Small ribosomal subunit protein uS13 (118 aa).

Residues 94–118 (SLPLRGQRTKTNARTRKGPRKPIRK) form a disordered region.

Belongs to the universal ribosomal protein uS13 family. As to quaternary structure, part of the 30S ribosomal subunit. Forms a loose heterodimer with protein S19. Forms two bridges to the 50S subunit in the 70S ribosome.

Located at the top of the head of the 30S subunit, it contacts several helices of the 16S rRNA. In the 70S ribosome it contacts the 23S rRNA (bridge B1a) and protein L5 of the 50S subunit (bridge B1b), connecting the 2 subunits; these bridges are implicated in subunit movement. Contacts the tRNAs in the A and P-sites. The polypeptide is Small ribosomal subunit protein uS13 (Shewanella sediminis (strain HAW-EB3)).